Reading from the N-terminus, the 165-residue chain is Protein SprT (165 aa).

Residues glutamate 10–valine 157 form the SprT-like domain. A Zn(2+)-binding site is contributed by histidine 69. Glutamate 70 is an active-site residue. Histidine 73 is a Zn(2+) binding site.

The protein belongs to the SprT family. Zn(2+) is required as a cofactor.

It is found in the cytoplasm. The protein is Protein SprT of Pseudomonas paraeruginosa (strain DSM 24068 / PA7) (Pseudomonas aeruginosa (strain PA7)).